A 391-amino-acid polypeptide reads, in one-letter code: ATPase GET3C (391 aa).

Residues 1–50 (MAALLLLNRVSRSTSSISLHRVAGTLGFNSFNAQIHGDRISGTLFRVRSL) constitute a mitochondrion transit peptide. An ATP-binding site is contributed by 77-84 (KGGVGKTS). Residue Asp106 is part of the active site. ATP is bound at residue Asn328.

It belongs to the arsA ATPase family.

It is found in the mitochondrion matrix. It carries out the reaction ATP + H2O = ADP + phosphate + H(+). In Arabidopsis thaliana (Mouse-ear cress), this protein is ATPase GET3C.